The following is a 274-amino-acid chain: Sulfur carrier protein FdhD (274 aa).

Catalysis depends on Cys121, which acts as the Cysteine persulfide intermediate. 258 to 263 (FSKPGR) serves as a coordination point for Mo-bis(molybdopterin guanine dinucleotide).

Belongs to the FdhD family.

It localises to the cytoplasm. In terms of biological role, required for formate dehydrogenase (FDH) activity. Acts as a sulfur carrier protein that transfers sulfur from IscS to the molybdenum cofactor prior to its insertion into FDH. This Yersinia pseudotuberculosis serotype O:3 (strain YPIII) protein is Sulfur carrier protein FdhD.